A 235-amino-acid chain; its full sequence is NADH-quinone oxidoreductase subunit C (235 aa).

Belongs to the complex I 30 kDa subunit family. As to quaternary structure, NDH-1 is composed of 14 different subunits. Subunits NuoB, C, D, E, F, and G constitute the peripheral sector of the complex.

It localises to the cell membrane. It catalyses the reaction a quinone + NADH + 5 H(+)(in) = a quinol + NAD(+) + 4 H(+)(out). Its function is as follows. NDH-1 shuttles electrons from NADH, via FMN and iron-sulfur (Fe-S) centers, to quinones in the respiratory chain. The immediate electron acceptor for the enzyme in this species is believed to be a menaquinone. Couples the redox reaction to proton translocation (for every two electrons transferred, four hydrogen ions are translocated across the cytoplasmic membrane), and thus conserves the redox energy in a proton gradient. The protein is NADH-quinone oxidoreductase subunit C of Mycolicibacterium paratuberculosis (strain ATCC BAA-968 / K-10) (Mycobacterium paratuberculosis).